The following is a 336-amino-acid chain: Ribosomal RNA large subunit methyltransferase F (336 aa).

Residues 1-24 (MPRPTSPHPDAERKSASPLHPRNR) are disordered.

Belongs to the methyltransferase superfamily. METTL16/RlmF family.

The protein resides in the cytoplasm. The enzyme catalyses adenosine(1618) in 23S rRNA + S-adenosyl-L-methionine = N(6)-methyladenosine(1618) in 23S rRNA + S-adenosyl-L-homocysteine + H(+). Its function is as follows. Specifically methylates the adenine in position 1618 of 23S rRNA. This chain is Ribosomal RNA large subunit methyltransferase F, found in Pseudomonas aeruginosa (strain LESB58).